The following is a 242-amino-acid chain: Pyridoxine 5'-phosphate synthase (242 aa).

Asparagine 6 is a 3-amino-2-oxopropyl phosphate binding site. Residue 8-9 (DH) participates in 1-deoxy-D-xylulose 5-phosphate binding. Residue arginine 17 participates in 3-amino-2-oxopropyl phosphate binding. Residue histidine 42 is the Proton acceptor of the active site. Residues arginine 44 and histidine 49 each contribute to the 1-deoxy-D-xylulose 5-phosphate site. Glutamate 69 functions as the Proton acceptor in the catalytic mechanism. Threonine 99 lines the 1-deoxy-D-xylulose 5-phosphate pocket. The active-site Proton donor is the histidine 190. Residues glycine 191 and 212 to 213 (GH) contribute to the 3-amino-2-oxopropyl phosphate site.

It belongs to the PNP synthase family. In terms of assembly, homooctamer; tetramer of dimers.

Its subcellular location is the cytoplasm. The catalysed reaction is 3-amino-2-oxopropyl phosphate + 1-deoxy-D-xylulose 5-phosphate = pyridoxine 5'-phosphate + phosphate + 2 H2O + H(+). It participates in cofactor biosynthesis; pyridoxine 5'-phosphate biosynthesis; pyridoxine 5'-phosphate from D-erythrose 4-phosphate: step 5/5. Its function is as follows. Catalyzes the complicated ring closure reaction between the two acyclic compounds 1-deoxy-D-xylulose-5-phosphate (DXP) and 3-amino-2-oxopropyl phosphate (1-amino-acetone-3-phosphate or AAP) to form pyridoxine 5'-phosphate (PNP) and inorganic phosphate. The chain is Pyridoxine 5'-phosphate synthase from Neisseria meningitidis serogroup B (strain ATCC BAA-335 / MC58).